The following is a 187-amino-acid chain: dTTP/UTP pyrophosphatase (187 aa).

Catalysis depends on Asp-65, which acts as the Proton acceptor.

Belongs to the Maf family. YhdE subfamily. It depends on a divalent metal cation as a cofactor.

Its subcellular location is the cytoplasm. It catalyses the reaction dTTP + H2O = dTMP + diphosphate + H(+). It carries out the reaction UTP + H2O = UMP + diphosphate + H(+). Nucleoside triphosphate pyrophosphatase that hydrolyzes dTTP and UTP. May have a dual role in cell division arrest and in preventing the incorporation of modified nucleotides into cellular nucleic acids. This chain is dTTP/UTP pyrophosphatase, found in Deinococcus geothermalis (strain DSM 11300 / CIP 105573 / AG-3a).